Here is a 2377-residue protein sequence, read N- to C-terminus: Serine/threonine-protein kinase WNK1 (2377 aa).

Disordered stretches follow at residues 1–79 and 93–203; these read MSDG…RFFR and LPGL…QQDD. A phosphothreonine mark is found at T17 and T58. The segment covering 48–64 has biased composition (basic and acidic residues); sequence RTEEYRRRRHTMDKDSR. Composition is skewed to low complexity over residues 101–111 and 127–141; these read PQPSVPAVVPQ and VASQVSQQPSAAASP. Positions 149 to 158 are enriched in polar residues; that stretch reads SATTTVPSST. A phosphoserine mark is found at S165 and S172. A Protein kinase domain is found at 221 to 479; the sequence is LKFDIEIGRG…IKDLLNHAFF (259 aa). S231 is an ATP binding site. Chloride-binding residues include F283 and L299. ATP contacts are provided by residues 301-304 and K351; that span reads TELM. The Proton acceptor role is filled by D368. 2 residues coordinate chloride: L369 and L371. 2 positions are modified to phosphoserine; by autocatalysis: S378 and S382. The segment at 488–555 is autoinhibitory domain; that stretch reads ELAEEDDGEK…VCEGDHKTMA (68 aa). A compositionally biased stretch (basic and acidic residues) spans 573 to 588; it reads QLVREEQEKRKQEESS. Disordered stretches follow at residues 573 to 782 and 1013 to 1114; these read QLVR…SAGT and PAVS…SRPK. Polar residues-rich tracts occupy residues 593 to 628, 638 to 705, and 713 to 733; these read NEQQASVSQAGIQQLSAASTGIPTAPATSASVSTQV, HQQL…QSQP, and SMAQGQNQGQPSSSLAGVLSS. An interaction with KLHL3 region spans residues 629 to 639; it reads EPEEPEADQHQ. A compositionally biased stretch (low complexity) spans 734-746; the sequence is QPIQHPQQQGIQP. The span at 747-782 shows a compositional bias: polar residues; the sequence is TVPSQQAVQYSLPQAASSSEGTTAQPVSQPQVSAGT. Over residues 1018-1028 the composition is skewed to low complexity; it reads TQQPPTTSSQQ. Positions 1029-1038 are enriched in polar residues; sequence AVLESTQGVS. Positions 1042–1058 are enriched in low complexity; it reads PPEQTPITQSQPTQPVP. Polar residues predominate over residues 1075–1085; it reads SDGNENAPSSS. Residues 1093 to 1114 show a composition bias toward basic residues; that stretch reads TKRHYRKSVRSRSRHEKTSRPK. The short motif at 1252–1255 is the RFXV motif 1 element; sequence RFIV. S1256 is modified (phosphoserine). Disordered stretches follow at residues 1726–1760 and 1818–1847; these read GQVSTPGTHASAPVGTATGVKPGTTPPKPTKTVVP and TMSSTTVTEAGTRLQKDGTEGHVTATSSGA. Residues 1738–1748 show a composition bias toward low complexity; it reads PVGTATGVKPG. A Phosphothreonine modification is found at T1843. The RFXV motif 2 signature appears at 1854-1857; sequence RFQV. Residues 1860 to 1945 are disordered; sequence TMDDAQKERK…TKVGRFQVTT (86 aa). Positions 1863-1879 are enriched in basic and acidic residues; it reads DAQKERKNRSEDTKSVH. A compositionally biased stretch (low complexity) spans 1882 to 1900; sequence SSTSESSVLSSSSPESTLV. Short sequence motifs (RFXV motif) lie at residues 1940-1943 and 1952-1955; these read RFQV and RFSV. Residues 1959–1969 show a composition bias toward basic and acidic residues; sequence EDKVTELKKEG. Disordered regions lie at residues 1959-1984, 1989-2008, 2015-2064, 2107-2191, and 2203-2239; these read EDKVTELKKEGPVTSPPFRDSEQTVI, PKKEKPELAEPSHLNGPSSD, SRGT…DIED, VIIP…NLYS, and SLSAPGQGTSSTNTVGGTVSSQAAQAQPPAMTSSRKG. S1973 is modified (phosphoserine). Residues 1989–1998 show a composition bias toward basic and acidic residues; it reads PKKEKPELAE. Phosphoserine occurs at positions 2006, 2007, 2022, 2024, and 2027. A compositionally biased stretch (low complexity) spans 2035-2057; sequence SLPVQNLSQSLSNSFNSSYMSSD. Phosphoserine is present on S2116. The segment covering 2117-2129 has biased composition (basic residues); the sequence is GRRRRPTKSKGSK. Over residues 2130–2140 the composition is skewed to low complexity; sequence SSRSSSLGNKS. Polar residues predominate over residues 2141–2191; the sequence is PQLSGNLSGQSGTSVLHPQQTLHPAGNTPETGHNQLLQPLKPSPSSDNLYS. The segment covering 2208 to 2232 has biased composition (low complexity); it reads GQGTSSTNTVGGTVSSQAAQAQPPA. The tract at residues 2236 to 2256 is amphipathic alpha-helix; sequence SRKGTFTDDLHKLVDNWARDA. Phosphoserine occurs at positions 2265 and 2281. Residues 2325-2344 are disordered; sequence PAPFGTQWSGTGGPAPQPLG. Phosphoserine occurs at positions 2365 and 2367.

It belongs to the protein kinase superfamily. Ser/Thr protein kinase family. WNK subfamily. Interacts with WNK3. Interacts with WNK4; inhibiting the activity of WNK4. Interacts with SGK1; promoting its activation. Associates with the mTORC2 complex. Interacts with UVRAG. In terms of assembly, interacts with isoform 1; inhibiting isoform 1 activity. Requires Mg(2+) as cofactor. In terms of processing, autophosphorylated at Ser-378 and Ser-382, promoting its activity. Autophosphorylation at Ser-382 is inhibited by intracellular calcium. Phosphorylation at Thr-58 increases ability to activate SGK1. Ubiquitinated by the BCR(KLHL3) complex, leading to its degradation. Also ubiquitinated by the BCR(KLHL2) complex. Post-translationally, may be O-glycosylated. In terms of tissue distribution, widely expressed in both adult and embryonic tissue, with highest levels observed in the testis and lower levels in heart, lung, kidney, placenta, brain and skeletal muscle. Expressed in pancreatic duct. Two isoforms are expressed in heart, a single shorter isoform in the kidney. Locates to the distal convoluted tubule, the medullary collecting duct and the cortical collecting duct of the kidney. As to expression, restricted to the nervous system, expressed preferentially in sensory neurons than in motor neurons and in general more abundant in axons than in cell bodies (at protein level). In the DRG, predominantly expressed in the satellite cells that envelop sensory neurons, but low expression also observed in the cell bodies of neurons (at protein level). In the sciatic nerve, expressed in the Schwann cells that surround axons and in a mosaic distribution of axons (at protein level). In the spinal cord, expressed in superficial layers (LI and LII), as well as in the fibers of the Lissauer tract (at protein level). Also detected in the axon fibers of dorsolateral funiculus and lateral funiculus (at protein level).

It localises to the cytoplasm. The protein localises to the nucleus. It is found in the cytoskeleton. Its subcellular location is the spindle. It carries out the reaction L-seryl-[protein] + ATP = O-phospho-L-seryl-[protein] + ADP + H(+). It catalyses the reaction L-threonyl-[protein] + ATP = O-phospho-L-threonyl-[protein] + ADP + H(+). Its activity is regulated as follows. Activated in response to hyperosmotic stress: cell shrinkage promotes formation of a membraneless compartment that concentrates WNK1 with its substrates, OXSR1/OSR1 and STK39/SPAK. Activation requires autophosphorylation of Ser-382 and, to a lower extent, Ser-378. Autophosphorylation and subsequent activation is inhibited by increases in intracellular ionic strength: Cl(-) potently inhibits WNK1 kinase activity via direct binding. Also inhibited by K(+) ions. Functionally, serine/threonine-protein kinase component of the WNK1-SPAK/OSR1 kinase cascade, which acts as a key regulator of blood pressure and regulatory volume increase by promoting ion influx. WNK1 mediates regulatory volume increase in response to hyperosmotic stress by acting as a molecular crowding sensor, which senses cell shrinkage and mediates formation of a membraneless compartment by undergoing liquid-liquid phase separation. The membraneless compartment concentrates WNK1 with its substrates, OXSR1/OSR1 and STK39/SPAK, promoting WNK1-dependent phosphorylation and activation of downstream kinases OXSR1/OSR1 and STK39/SPAK. Following activation, OXSR1/OSR1 and STK39/SPAK catalyze phosphorylation of ion cotransporters SLC12A1/NKCC2, SLC12A2/NKCC1, SLC12A5/KCC2 and SLC12A6/KCC3, regulating their activity. Phosphorylation of Na-K-Cl cotransporters SLC12A2/NKCC1 and SLC12A2/NKCC1 promote their activation and ion influx; simultaneously, phosphorylation of K-Cl cotransporters SLC12A5/KCC2 and SLC12A6/KCC3 inhibit their activity, blocking ion efflux. Also acts as a regulator of angiogenesis in endothelial cells. Also acts independently of the WNK1-SPAK/OSR1 kinase cascade by catalyzing phosphorylation of other substrates, such as SYT2, PCF11 and NEDD4L. Mediates phosphorylation of SYT2, regulating SYT2 association with phospholipids and membrane-binding. Regulates mRNA export in the nucleus by mediating phosphorylation of PCF11, thereby decreasing the association between PCF11 and POLR2A/RNA polymerase II and promoting mRNA export to the cytoplasm. Acts as a negative regulator of autophagy. Required for the abscission step during mitosis, independently of the WNK1-SPAK/OSR1 kinase cascade. WNK1 may also play a role in actin cytoskeletal reorganization. Also acts as a scaffold protein independently of its protein kinase activity: negatively regulates cell membrane localization of various transporters and channels, such as SLC4A4, SLC26A6, SLC26A9, TRPV4 and CFTR. Involved in the regulation of epithelial Na(+) channel (ENaC) by promoting activation of SGK1 in a kinase-independent manner: probably acts as a scaffold protein that promotes the recruitment of SGK1 to the mTORC2 complex in response to chloride, leading to mTORC2-dependent phosphorylation and activation of SGK1. Acts as an assembly factor for the ER membrane protein complex independently of its protein kinase activity: associates with EMC2 in the cytoplasm via its amphipathic alpha-helix, and prevents EMC2 ubiquitination and subsequent degradation, thereby promoting EMC2 stabilization. Kinase-defective isoform specifically expressed in kidney, which acts as a dominant-negative regulator of the longer isoform 1. Does not directly inhibit WNK4 and has no direct effect on sodium and chloride ion transport. Down-regulates sodium-chloride cotransporter activity indirectly by inhibiting isoform 1, it associates with isoform 1 and attenuates its kinase activity. In kidney, may play an important role regulating sodium and potassium balance. This is Serine/threonine-protein kinase WNK1 from Mus musculus (Mouse).